Reading from the N-terminus, the 434-residue chain is UPF0597 protein CLK_1462 (434 aa).

The protein belongs to the UPF0597 family.

The protein is UPF0597 protein CLK_1462 of Clostridium botulinum (strain Loch Maree / Type A3).